A 307-amino-acid polypeptide reads, in one-letter code: 4-hydroxythreonine-4-phosphate dehydrogenase (307 aa).

Positions 121 and 122 each coordinate substrate. A divalent metal cation contacts are provided by histidine 150, histidine 189, and histidine 246. Substrate is bound by residues lysine 254, asparagine 263, and arginine 272.

The protein belongs to the PdxA family. Homodimer. It depends on Zn(2+) as a cofactor. Mg(2+) serves as cofactor. Requires Co(2+) as cofactor.

It localises to the cytoplasm. It carries out the reaction 4-(phosphooxy)-L-threonine + NAD(+) = 3-amino-2-oxopropyl phosphate + CO2 + NADH. It participates in cofactor biosynthesis; pyridoxine 5'-phosphate biosynthesis; pyridoxine 5'-phosphate from D-erythrose 4-phosphate: step 4/5. Functionally, catalyzes the NAD(P)-dependent oxidation of 4-(phosphooxy)-L-threonine (HTP) into 2-amino-3-oxo-4-(phosphooxy)butyric acid which spontaneously decarboxylates to form 3-amino-2-oxopropyl phosphate (AHAP). In Campylobacter fetus subsp. fetus (strain 82-40), this protein is 4-hydroxythreonine-4-phosphate dehydrogenase.